The following is a 599-amino-acid chain: Transcription factor COE4 (599 aa).

The interval 64-67 (RKSN) is interaction with DNA. The segment at 152-171 (CRVLLTHEIMCSRCCDRKSC) adopts a C5-type zinc-finger fold. 2 interaction with DNA regions span residues 198 to 205 (NCLKNAGN) and 237 to 240 (NNSK). Residues 256-339 (PCIKAISPGE…KGAPGRFVYT (84 aa)) form the IPT/TIG domain. Disordered regions lie at residues 449–473 (GYARSCGSASPRFAPSPGSQQSSYG) and 556–586 (VLRPPSSPSQACPRAHREGLPDQPFEDTDKF). Over residues 464 to 473 (SPGSQQSSYG) the composition is skewed to low complexity.

Belongs to the COE family. Forms either a homodimer or a heterodimer with a related family member. Expressed in the olfactory epithelium, including in both neuronal and basal cell layers. Absent in the vomeronasal organ. Absent from NK cells and CD8(+) T cells.

Its subcellular location is the nucleus. Its function is as follows. Transcription factor. Positively modulates transcription, perhaps less strongly than other early B cell factor/EBF family proteins. Binds an EBF1/Olf-1 consensus site in vitro. The sequence is that of Transcription factor COE4 (Ebf4) from Mus musculus (Mouse).